Consider the following 406-residue polypeptide: Argininosuccinate synthase (406 aa).

ATP contacts are provided by residues A14–S22 and A41. The L-citrulline site is built by Y92 and S97. Residue G122 coordinates ATP. L-aspartate contacts are provided by T124, N128, and D129. Residue N128 participates in L-citrulline binding. L-citrulline-binding residues include R132, S181, S190, E266, and Y278.

The protein belongs to the argininosuccinate synthase family. Type 1 subfamily. In terms of assembly, homotetramer.

It localises to the cytoplasm. It catalyses the reaction L-citrulline + L-aspartate + ATP = 2-(N(omega)-L-arginino)succinate + AMP + diphosphate + H(+). It functions in the pathway amino-acid biosynthesis; L-arginine biosynthesis; L-arginine from L-ornithine and carbamoyl phosphate: step 2/3. In Geobacter metallireducens (strain ATCC 53774 / DSM 7210 / GS-15), this protein is Argininosuccinate synthase.